Consider the following 140-residue polypeptide: Methylglyoxal synthase (140 aa).

The MGS-like domain maps to 1 to 140 (MRSKPRIALI…DQAAADDAAP (140 aa)). Substrate contacts are provided by residues histidine 12, lysine 16, 38 to 41 (TGTT), and 58 to 59 (SG). The active-site Proton donor/acceptor is aspartate 64. Position 91 (histidine 91) interacts with substrate.

The protein belongs to the methylglyoxal synthase family.

The catalysed reaction is dihydroxyacetone phosphate = methylglyoxal + phosphate. Its function is as follows. Catalyzes the formation of methylglyoxal from dihydroxyacetone phosphate. The protein is Methylglyoxal synthase of Cupriavidus metallidurans (strain ATCC 43123 / DSM 2839 / NBRC 102507 / CH34) (Ralstonia metallidurans).